A 427-amino-acid chain; its full sequence is Inward rectifier potassium channel 2 (427 aa).

Residues 1-81 (MGSVRTNRYS…IFTTCVDIRW (81 aa)) are Cytoplasmic-facing. An S-nitrosocysteine modification is found at C76. The chain crosses the membrane as a helical span at residues 82-106 (RWMLVIFCLAFVLSWLFFGCVFWLI). Over 107 to 128 (ALLHGDLDASKESKACVSEVNS) the chain is Extracellular. The segment at residues 129-140 (FTAAFLFSIETQ) is an intramembrane region (helical; Pore-forming). The pore-forming intramembrane region spans 141–147 (TTIGYGF). Residues 142–147 (TIGYGF) carry the Selectivity filter motif. The Extracellular portion of the chain corresponds to 148–156 (RCVTDECPV). A helical membrane pass occupies residues 157-178 (AVFMVVFQSIVGCIIDAFIIGA). Topologically, residues 179–427 (VMAKMAKPKK…PRPLRRESEI (249 aa)) are cytoplasmic. Residues 181–208 (AKMAKPKKRNETLVFSHNAVIAMRDGKL) are polyphosphoinositide (PIP2)-binding. The interval 384–427 (SKEEDDSENGVPESTSTDTPPDIDLHNQASVPLEPRPLRRESEI) is disordered. The short motif at 425-427 (SEI) is the PDZ-binding element.

Belongs to the inward rectifier-type potassium channel (TC 1.A.2.1) family. KCNJ2 subfamily. In terms of assembly, homotetramer. Homomultimeric and heteromultimeric association with KCNJ4/Kir2.3. Can form heteromeric channels with Kir2.6/KCNJ18. Associates, via its PDZ-recognition domain, with a complex containing LIN7A, LIN7B, LIN7C, DLG1, CASK and APBA1. S-nitrosylation increases the open probability and inward rectifying currents.

The protein localises to the cell membrane. It localises to the sarcolemma. It is found in the T-tubule. It carries out the reaction K(+)(in) = K(+)(out). With respect to regulation, activated by phosphatidylinositol 4,5 biphosphate (PtdIns(4,5)P2). In terms of biological role, inward rectifier potassium channels are characterized by a greater tendency to allow potassium to flow into the cell rather than out of it. Their voltage dependence is regulated by the concentration of extracellular potassium; as external potassium is raised, the voltage range of the channel opening shifts to more positive voltages. The inward rectification is mainly due to the blockage of outward current by internal magnesium. Can be blocked by extracellular barium and cesium. Probably participates in establishing action potential waveform and excitability of neuronal and muscle tissues. This is Inward rectifier potassium channel 2 (KCNJ2) from Bos taurus (Bovine).